The primary structure comprises 283 residues: Bifunctional protein FolD (283 aa).

Residues 165 to 167, Ser190, and Ile231 contribute to the NADP(+) site; that span reads GRS.

This sequence belongs to the tetrahydrofolate dehydrogenase/cyclohydrolase family. As to quaternary structure, homodimer.

The enzyme catalyses (6R)-5,10-methylene-5,6,7,8-tetrahydrofolate + NADP(+) = (6R)-5,10-methenyltetrahydrofolate + NADPH. It carries out the reaction (6R)-5,10-methenyltetrahydrofolate + H2O = (6R)-10-formyltetrahydrofolate + H(+). It functions in the pathway one-carbon metabolism; tetrahydrofolate interconversion. Functionally, catalyzes the oxidation of 5,10-methylenetetrahydrofolate to 5,10-methenyltetrahydrofolate and then the hydrolysis of 5,10-methenyltetrahydrofolate to 10-formyltetrahydrofolate. This Herminiimonas arsenicoxydans protein is Bifunctional protein FolD.